The following is a 344-amino-acid chain: Protein RecA (344 aa).

65 to 72 (GPESSGKT) provides a ligand contact to ATP.

The protein belongs to the RecA family.

The protein resides in the cytoplasm. Functionally, can catalyze the hydrolysis of ATP in the presence of single-stranded DNA, the ATP-dependent uptake of single-stranded DNA by duplex DNA, and the ATP-dependent hybridization of homologous single-stranded DNAs. It interacts with LexA causing its activation and leading to its autocatalytic cleavage. The protein is Protein RecA of Campylobacter lari.